A 219-amino-acid chain; its full sequence is Uracil-DNA glycosylase (219 aa).

Asp-59 serves as the catalytic Proton acceptor.

This sequence belongs to the uracil-DNA glycosylase (UDG) superfamily. UNG family.

It is found in the cytoplasm. It carries out the reaction Hydrolyzes single-stranded DNA or mismatched double-stranded DNA and polynucleotides, releasing free uracil.. Excises uracil residues from the DNA which can arise as a result of misincorporation of dUMP residues by DNA polymerase or due to deamination of cytosine. This Macrococcus caseolyticus (strain JCSC5402) (Macrococcoides caseolyticum) protein is Uracil-DNA glycosylase.